We begin with the raw amino-acid sequence, 26 residues long: Toxin TdII-1 (26 aa).

The protein belongs to the long (4 C-C) scorpion toxin superfamily. Sodium channel inhibitor family. Beta subfamily. In terms of tissue distribution, expressed by the venom gland.

It localises to the secreted. In terms of biological role, beta toxins bind voltage-independently at site-4 of sodium channels (Nav) and shift the voltage of activation toward more negative potentials thereby affecting sodium channel activation and promoting spontaneous and repetitive firing. This toxin is active against mammals and crustaceans. In Tityus discrepans (Venezuelan scorpion), this protein is Toxin TdII-1.